Reading from the N-terminus, the 480-residue chain is RNA-binding protein 42 (480 aa).

Residues Met1–Gly30 form a disordered region. Ala2 is subject to N-acetylalanine. A compositionally biased stretch (gly residues) spans Pro11–Gly27. The residue at position 135 (Ser135) is a Phosphoserine. Asymmetric dimethylarginine occurs at positions 153, 158, 168, and 181. The tract at residues Glu236–Arg480 is necessary for interaction with HNRNPK. Residues Ser319–Leu356 form a disordered region. Positions Gly345–Leu356 are enriched in basic and acidic residues. The 79-residue stretch at Phe381–Trp459 folds into the RRM domain.

The protein belongs to the RRM RBM42 family. As to quaternary structure, interacts with HNRNPK.

Its subcellular location is the nucleus. The protein localises to the cytoplasm. In terms of biological role, binds (via the RRM domain) to the 3'-untranslated region (UTR) of CDKN1A mRNA. This is RNA-binding protein 42 (RBM42) from Homo sapiens (Human).